A 410-amino-acid chain; its full sequence is MTEKLVLAYSGGLDTSVAIPWLKEKGYDVIAVVLNVGQHGKDMVAIQEKALKVGASQSIVIDAQAEFADQYVAPVIKANMLYEGEYPMVSALSRPLIIKKLVDIAHENEAVAIAHGSTGHGNDQVRFEAAIHALDPDMKIEAPIRDFQWSREEEIEYAQQHDVPVPINLESPYSIDENLWGRANEAGILENPWHQAPEDAYALTTAIENTPDIPEFVDVTFTAGIPTALDGNEMPLADLIIKLNIMAGTHGIGRIDHIENRLVGIKSREIYEAPAAAVLMTAHKDLEDLTLERDVAHFKPMVEQQLANLVYEAKWVSPLFDSLMAFVDETQKNVNGVVKMKLFKGSAIAVARQSEHNSLYDEDLATYTSASSFDQAAAVGFIKLWTLSNTVYEQVNHVHSQKPSQLKLKN.

An ATP-binding site is contributed by alanine 8 to serine 16. Tyrosine 86 serves as a coordination point for L-citrulline. Position 116 (glycine 116) interacts with ATP. Threonine 118, asparagine 122, and aspartate 123 together coordinate L-aspartate. Asparagine 122 contributes to the L-citrulline binding site. L-citrulline contacts are provided by arginine 126, serine 174, glutamate 259, and tyrosine 271.

It belongs to the argininosuccinate synthase family. Type 1 subfamily. Homotetramer.

The protein resides in the cytoplasm. The catalysed reaction is L-citrulline + L-aspartate + ATP = 2-(N(omega)-L-arginino)succinate + AMP + diphosphate + H(+). It functions in the pathway amino-acid biosynthesis; L-arginine biosynthesis; L-arginine from L-ornithine and carbamoyl phosphate: step 2/3. The polypeptide is Argininosuccinate synthase (Leuconostoc citreum (strain KM20)).